The primary structure comprises 341 residues: MLLLSIESSCDETAASVVRNGREILSNIVASQISIHADYGGVVPEIASRKHLETISIVIEEALRKADLPISAIEGIAVTRGPGLAGALLVGISTAKALAYGLNIPVVGVNHIESHILAIMLESDVKFPFIALAVSGGHTHLYEVQAIGRYRTIGQTLDDAAGEAFDKVAKLMGLPYPGGALIDRLAAEGDPRAIKFPRPLMHEDNYNFSFSGLKTAVLNYVRKNPAAMEGSALNDVCASFQAAVCEVLVSKTRAAVIQSGIKRLVVAGGVACNSGLRRDMATFAETEGAELFIPSPLLCSDNAAMLAVPGDYYLCNNIACGFELDALPVWPLDAISLTGGN.

Residues histidine 111 and histidine 115 each coordinate Fe cation. Substrate-binding positions include alanine 133 to glycine 137, aspartate 166, glycine 179, aspartate 183, and asparagine 273. Residue aspartate 301 coordinates Fe cation.

Belongs to the KAE1 / TsaD family. Requires Fe(2+) as cofactor.

Its subcellular location is the cytoplasm. It catalyses the reaction L-threonylcarbamoyladenylate + adenosine(37) in tRNA = N(6)-L-threonylcarbamoyladenosine(37) in tRNA + AMP + H(+). Its function is as follows. Required for the formation of a threonylcarbamoyl group on adenosine at position 37 (t(6)A37) in tRNAs that read codons beginning with adenine. Is involved in the transfer of the threonylcarbamoyl moiety of threonylcarbamoyl-AMP (TC-AMP) to the N6 group of A37, together with TsaE and TsaB. TsaD likely plays a direct catalytic role in this reaction. This Geotalea daltonii (strain DSM 22248 / JCM 15807 / FRC-32) (Geobacter daltonii) protein is tRNA N6-adenosine threonylcarbamoyltransferase.